An 89-amino-acid chain; its full sequence is Small ribosomal subunit protein uS15 (89 aa).

This sequence belongs to the universal ribosomal protein uS15 family. As to quaternary structure, part of the 30S ribosomal subunit. Forms a bridge to the 50S subunit in the 70S ribosome, contacting the 23S rRNA.

Its function is as follows. One of the primary rRNA binding proteins, it binds directly to 16S rRNA where it helps nucleate assembly of the platform of the 30S subunit by binding and bridging several RNA helices of the 16S rRNA. Functionally, forms an intersubunit bridge (bridge B4) with the 23S rRNA of the 50S subunit in the ribosome. This is Small ribosomal subunit protein uS15 from Bifidobacterium longum (strain DJO10A).